Reading from the N-terminus, the 121-residue chain is Trypsin/alpha-amylase inhibitor CMX2 (121 aa).

The first 24 residues, 1–24, serve as a signal peptide directing secretion; that stretch reads MAFKHQLILSTAILLAVLAAASAS.

Belongs to the protease inhibitor I6 (cereal trypsin/alpha-amylase inhibitor) family.

Its subcellular location is the secreted. The protein is Trypsin/alpha-amylase inhibitor CMX2 of Triticum aestivum (Wheat).